The primary structure comprises 203 residues: FMN-dependent NADH:quinone oxidoreductase (203 aa).

143-146 (SNGG) contributes to the FMN binding site.

This sequence belongs to the azoreductase type 1 family. In terms of assembly, homodimer. It depends on FMN as a cofactor.

The catalysed reaction is 2 a quinone + NADH + H(+) = 2 a 1,4-benzosemiquinone + NAD(+). It carries out the reaction N,N-dimethyl-1,4-phenylenediamine + anthranilate + 2 NAD(+) = 2-(4-dimethylaminophenyl)diazenylbenzoate + 2 NADH + 2 H(+). Functionally, quinone reductase that provides resistance to thiol-specific stress caused by electrophilic quinones. In terms of biological role, also exhibits azoreductase activity. Catalyzes the reductive cleavage of the azo bond in aromatic azo compounds to the corresponding amines. The polypeptide is FMN-dependent NADH:quinone oxidoreductase (Streptococcus suis (strain 98HAH33)).